A 274-amino-acid chain; its full sequence is NADPH-dependent 7-cyano-7-deazaguanine reductase (274 aa).

The disordered stretch occupies residues 1 to 33; that stretch reads MPKKDALDHLSLGQHTDYPNEYDPKQLQPVPRS. 84 to 86 lines the substrate pocket; the sequence is IES. Residue 86 to 87 participates in NADPH binding; that stretch reads SK. Catalysis depends on cysteine 183, which acts as the Thioimide intermediate. The Proton donor role is filled by aspartate 190. 222–223 provides a ligand contact to substrate; it reads HE. Residue 250 to 251 participates in NADPH binding; sequence RG.

The protein belongs to the GTP cyclohydrolase I family. QueF type 2 subfamily. In terms of assembly, homodimer.

The protein resides in the cytoplasm. It carries out the reaction 7-aminomethyl-7-carbaguanine + 2 NADP(+) = 7-cyano-7-deazaguanine + 2 NADPH + 3 H(+). It participates in tRNA modification; tRNA-queuosine biosynthesis. In terms of biological role, catalyzes the NADPH-dependent reduction of 7-cyano-7-deazaguanine (preQ0) to 7-aminomethyl-7-deazaguanine (preQ1). This is NADPH-dependent 7-cyano-7-deazaguanine reductase from Idiomarina loihiensis (strain ATCC BAA-735 / DSM 15497 / L2-TR).